A 1875-amino-acid chain; its full sequence is Nonribosomal peptide synthetase otaB (1875 aa).

Residues 202 to 590 are adenylation 1; the sequence is GQVRENGDRA…SIRFAGRRQA (389 aa). The Carrier domain occupies 724-800; the sequence is SPMTAAERVM…DLVAHIKDAG (77 aa). O-(pantetheine 4'-phosphoryl)serine is present on serine 761. The segment at 836–1245 is condensation; that stretch reads EDVYPCTTLQ…LVSPLDEERL (410 aa). Residues 1264–1659 are adenylation 2; it reads QKQSYAQPQA…ARKDTQVKIR (396 aa).

The protein belongs to the NRP synthetase family.

It carries out the reaction 7-carboxymellein + L-phenylalanine + ATP = ochratoxin B + ADP + phosphate + H(+). It participates in mycotoxin biosynthesis. Nonribosomal peptide synthetase; part of the gene cluster that mediates the biosynthesis of ochratoxin A (OTA), a mycotoxin composed of a chlorinated type I polyketide dihydroisocoumarin moiety linked to L-phenylalanine, and demonstrated to have nephrotoxic, immunotoxic, genotoxic, neurotoxic, and teratogenic properties. OtaB is responsible for the linking of phenylalanine to the dihydroisocoumarin ring. The pathway begins with the highly reducing polyketide synthase otaA that catalyzes the formation of the isocoumarin group during the initial stages of biosynthesis, starting from one acetate and 4 malonate units, to originate the characteristic pentaketide skeleton 7-methylmellein (7-MM) of the OTA molecule. The newly identified cyclase otaY might be involved in the polyketide cyclization reaction during the initial steps of the OTA biosynthesis. 7-MM is then oxidized into 7-carboxymellein (also called ochratoxin beta) by the cytochrome P450 monooxygenase otaC. The NRPS encoded by the otaB gene is involved in the linking of phenylalanine to the dihydroisocoumarin ring. The reaction catalyzed by NRPS results in the production of ochratoxin B (OTB), which is the non-chlorinated analog of OTA and which subsequently serves as the substrate of the halogenase otaD for chlorination activity to form the final molecular structure of OTA, containing a chlorine atom in the C-5 position of the molecule. This is Nonribosomal peptide synthetase otaB from Aspergillus carbonarius (strain ITEM 5010).